Consider the following 157-residue polypeptide: Short-type peptidyl-prolyl cis-trans isomerase (157 aa).

The PPIase FKBP-type domain occupies 1–95 (MINLIKKGDY…RDERLIQEIP (95 aa)). The interval 86-137 (RDERLIQEIPKEMFADADFEPQEGMLILASGIPAKIIKVTDDTVTLDFNHEL) is IF.

This sequence belongs to the FKBP-type PPIase family.

It localises to the cytoplasm. The catalysed reaction is [protein]-peptidylproline (omega=180) = [protein]-peptidylproline (omega=0). Its function is as follows. Catalyzes the cis-trans isomerization of peptidyl prolyl bonds and accelerates protein folding. Also exhibits chaperone-like activity. This is Short-type peptidyl-prolyl cis-trans isomerase from Methanocaldococcus jannaschii (strain ATCC 43067 / DSM 2661 / JAL-1 / JCM 10045 / NBRC 100440) (Methanococcus jannaschii).